The following is a 108-amino-acid chain: Tetrahydromethanopterin S-methyltransferase subunit B (108 aa).

The helical transmembrane segment at 81 to 101 (FFGFWISLSILTLGLILVIGL) threads the bilayer.

The protein belongs to the MtrB family. As to quaternary structure, the complex is composed of 8 subunits; MtrA, MtrB, MtrC, MtrD, MtrE, MtrF, MtrG and MtrH.

The protein localises to the cell membrane. The enzyme catalyses 5-methyl-5,6,7,8-tetrahydromethanopterin + coenzyme M + 2 Na(+)(in) = 5,6,7,8-tetrahydromethanopterin + methyl-coenzyme M + 2 Na(+)(out). It functions in the pathway one-carbon metabolism; methanogenesis from CO(2); methyl-coenzyme M from 5,10-methylene-5,6,7,8-tetrahydromethanopterin: step 2/2. In terms of biological role, part of a complex that catalyzes the formation of methyl-coenzyme M and tetrahydromethanopterin from coenzyme M and methyl-tetrahydromethanopterin. This is an energy-conserving, sodium-ion translocating step. This chain is Tetrahydromethanopterin S-methyltransferase subunit B, found in Methanococcus aeolicus (strain ATCC BAA-1280 / DSM 17508 / OCM 812 / Nankai-3).